Here is a 1068-residue protein sequence, read N- to C-terminus: Receptor-like protein 13 (1068 aa).

The first 23 residues, 1-23 (MEGKLFLGQYLICVILLLGQLHG), serve as a signal peptide directing secretion. At 24 to 986 (YKSCIEKERK…EADESTVDME (963 aa)) the chain is on the extracellular side. Asparagine 59 and asparagine 97 each carry an N-linked (GlcNAc...) asparagine glycan. LRR repeat units lie at residues 104–129 (FEDVRSLDLSSSRSCEDCGFSGLFDD), 139–162 (LRNLEILDLSSHRFNNSIFPFLNA), 164–187 (TSLTTLFLTYNNMHSPFLVKEFKD), 188–212 (LTNLEHLDLRGNRFNGSIPTQDYNS), 216–239 (FRKLEILDLSDNLFNSRIFPFLNS), 241–264 (TSLKSLSLWGNNMGGPFPAKELRD), 265–290 (LTNVELLDLSRNRFNGSIPVRALFAL), 292–315 (KLKALDLSDNEFSSSVELQGKFAK), 325–349 (WKNMEELKLSNNKLAGQFPLCLTSL), 350–373 (TGLRVLDLSSNQLTGNVPSALANL), 375–397 (SLEYLSLFGNNFEGFFSLGLLAN), 398–423 (LSKLKVLRLDSQSNSLEVEFETSWKP), 424–447 (KFQLVVIALRSCNLEKVPHFLLHQ), 448–471 (KDLHHVDLSDNQIHGNFPSWLLEN), 472–497 (NTKLEVLLLQNNSFTSFQLPKSAHNL), 499–517 (FLNVSVNKFNHLFLQNFGW), 519–543 (LPHLVCVNLAYNGFQGNLPSSLDNM), 544–567 (KSIEFLDLSHNRFHGKLPRRFLKG), and 569–594 (YNLTILKLSHNKLSGEVFPEAANFTR). An N-linked (GlcNAc...) asparagine glycan is attached at asparagine 153. Residue asparagine 202 is glycosylated (N-linked (GlcNAc...) asparagine). Residue asparagine 279 is glycosylated (N-linked (GlcNAc...) asparagine). Asparagine 397 carries an N-linked (GlcNAc...) asparagine glycan. N-linked (GlcNAc...) asparagine glycosylation is found at asparagine 471, asparagine 482, and asparagine 501. N-linked (GlcNAc...) asparagine glycosylation is found at asparagine 570 and asparagine 591. The stretch at 596–615 (WVMSMDNNLFTGNIGKGFRS) is one LRR 20; degenerate repeat. 5 LRR repeats span residues 616–639 (LPSLNVLDISNNKLTGVIPSWIGE), 641–664 (QGLFALQLSNNMLEGEIPTSLFNI), 665–688 (SYLQLLDLSSNRLSGDIPPHVSSI), 690–710 (HGAVLLLQNNNLSGVIPDTLL), and 711–734 (LNVIVLDLRNNRLSGNLPEFINTQ). Asparagine 663 carries an N-linked (GlcNAc...) asparagine glycan. A glycan (N-linked (GlcNAc...) asparagine) is linked at asparagine 700. N-linked (GlcNAc...) asparagine glycans are attached at residues asparagine 735, asparagine 745, asparagine 771, asparagine 780, and asparagine 822. LRR repeat units follow at residues 736 to 757 (ISILLLRGNNFTGQIPHQFCSL) and 758 to 781 (SNIQLLDLSNNKFNGSIPSCLSNT). 4 LRR repeats span residues 846 to 870 (LKLLFGMDLSENELSGEIPVELGGL), 871 to 893 (VELEALNLSHNNLSGVILESFSG), 895 to 918 (KNVESLDLSFNRLQGPIPLQLTDM), and 920 to 943 (SLAVFNVSYNNLSGIVPQGRQFNT). 2 N-linked (GlcNAc...) asparagine glycosylation sites follow: asparagine 877 and asparagine 882. N-linked (GlcNAc...) asparagine glycans are attached at residues asparagine 925 and asparagine 930. A helical membrane pass occupies residues 987-1007 (SFYWSFVAAYVTILLGILASL). The Cytoplasmic portion of the chain corresponds to 1008–1068 (SFDSPWSRAW…PPALFHKTRT (61 aa)).

It belongs to the RLP family.

The protein localises to the cell membrane. The sequence is that of Receptor-like protein 13 from Arabidopsis thaliana (Mouse-ear cress).